We begin with the raw amino-acid sequence, 91 residues long: ATP synthase subunit c 2 (91 aa).

2 consecutive transmembrane segments (helical) span residues 4-24 (FSMCVLGAAIGMAIGTLGTGI) and 53-73 (IGLAMIESLAIYALVICLIIL).

This sequence belongs to the ATPase C chain family. In terms of assembly, F-type ATPases have 2 components, F(1) - the catalytic core - and F(0) - the membrane proton channel. F(1) has five subunits: alpha(3), beta(3), gamma(1), delta(1), epsilon(1). F(0) has three main subunits: a(1), b(2) and c(10-14). The alpha and beta chains form an alternating ring which encloses part of the gamma chain. F(1) is attached to F(0) by a central stalk formed by the gamma and epsilon chains, while a peripheral stalk is formed by the delta and b chains.

It localises to the cell inner membrane. F(1)F(0) ATP synthase produces ATP from ADP in the presence of a proton or sodium gradient. F-type ATPases consist of two structural domains, F(1) containing the extramembraneous catalytic core and F(0) containing the membrane proton channel, linked together by a central stalk and a peripheral stalk. During catalysis, ATP synthesis in the catalytic domain of F(1) is coupled via a rotary mechanism of the central stalk subunits to proton translocation. Functionally, key component of the F(0) channel; it plays a direct role in translocation across the membrane. A homomeric c-ring of between 10-14 subunits forms the central stalk rotor element with the F(1) delta and epsilon subunits. The polypeptide is ATP synthase subunit c 2 (Pelobacter propionicus (strain DSM 2379 / NBRC 103807 / OttBd1)).